The chain runs to 430 residues: Adenylosuccinate synthetase (430 aa).

GTP-binding positions include 13–19 (GDEGKGK) and 41–43 (GHT). The active-site Proton acceptor is the aspartate 14. Mg(2+)-binding residues include aspartate 14 and glycine 41. Residues 14–17 (DEGK), 39–42 (NAGH), threonine 130, arginine 144, glutamine 225, threonine 240, and arginine 304 contribute to the IMP site. Catalysis depends on histidine 42, which acts as the Proton donor. 300–306 (STTGRAR) lines the substrate pocket. GTP contacts are provided by residues arginine 306, 332–334 (KLD), and 414–416 (STG).

Belongs to the adenylosuccinate synthetase family. Homodimer. Mg(2+) serves as cofactor.

The protein localises to the cytoplasm. The catalysed reaction is IMP + L-aspartate + GTP = N(6)-(1,2-dicarboxyethyl)-AMP + GDP + phosphate + 2 H(+). It participates in purine metabolism; AMP biosynthesis via de novo pathway; AMP from IMP: step 1/2. Its function is as follows. Plays an important role in the de novo pathway of purine nucleotide biosynthesis. Catalyzes the first committed step in the biosynthesis of AMP from IMP. This is Adenylosuccinate synthetase from Thioalkalivibrio sulfidiphilus (strain HL-EbGR7).